The primary structure comprises 206 residues: Probable peptidyl-tRNA hydrolase (206 aa).

The active-site Proton acceptor is the His48. TRNA contacts are provided by Tyr83, Asn85, and Asn137.

This sequence belongs to the PTH family.

It is found in the mitochondrion. It catalyses the reaction an N-acyl-L-alpha-aminoacyl-tRNA + H2O = an N-acyl-L-amino acid + a tRNA + H(+). Functionally, peptidyl-tRNA hydrolase involved in the recycling of tRNA-Lys from diacetyl-lysyl-tRNA-Lys and is important for mitochondrial function. This chain is Probable peptidyl-tRNA hydrolase (pth1), found in Schizosaccharomyces pombe (strain 972 / ATCC 24843) (Fission yeast).